The following is a 180-amino-acid chain: Large ribosomal subunit protein uL5 (180 aa).

Belongs to the universal ribosomal protein uL5 family. As to quaternary structure, part of the 50S ribosomal subunit; part of the 5S rRNA/L5/L18/L25 subcomplex. Contacts the 5S rRNA and the P site tRNA. Forms a bridge to the 30S subunit in the 70S ribosome.

This is one of the proteins that bind and probably mediate the attachment of the 5S RNA into the large ribosomal subunit, where it forms part of the central protuberance. In the 70S ribosome it contacts protein S13 of the 30S subunit (bridge B1b), connecting the 2 subunits; this bridge is implicated in subunit movement. Contacts the P site tRNA; the 5S rRNA and some of its associated proteins might help stabilize positioning of ribosome-bound tRNAs. The polypeptide is Large ribosomal subunit protein uL5 (Chloroflexus aurantiacus (strain ATCC 29364 / DSM 637 / Y-400-fl)).